The sequence spans 61 residues: Photosystem II reaction center protein K (61 aa).

A propeptide spanning residues Met-1–Ala-24 is cleaved from the precursor. The helical transmembrane segment at Met-40–Phe-60 threads the bilayer.

It belongs to the PsbK family. PSII is composed of 1 copy each of membrane proteins PsbA, PsbB, PsbC, PsbD, PsbE, PsbF, PsbH, PsbI, PsbJ, PsbK, PsbL, PsbM, PsbT, PsbX, PsbY, PsbZ, Psb30/Ycf12, at least 3 peripheral proteins of the oxygen-evolving complex and a large number of cofactors. It forms dimeric complexes.

The protein localises to the plastid. Its subcellular location is the chloroplast thylakoid membrane. Functionally, one of the components of the core complex of photosystem II (PSII). PSII is a light-driven water:plastoquinone oxidoreductase that uses light energy to abstract electrons from H(2)O, generating O(2) and a proton gradient subsequently used for ATP formation. It consists of a core antenna complex that captures photons, and an electron transfer chain that converts photonic excitation into a charge separation. The protein is Photosystem II reaction center protein K of Panax ginseng (Korean ginseng).